Reading from the N-terminus, the 247-residue chain is Disease resistance protein BAK6 (247 aa).

Residues 1-24 form the signal peptide; that stretch reads MAAVQFAAAGVLTGLLALATLASC. Asparagine 66, asparagine 104, and asparagine 113 each carry an N-linked (GlcNAc...) asparagine glycan. LRR repeat units follow at residues 90 to 114, 116 to 138, 139 to 161, 162 to 186, 188 to 210, and 213 to 237; these read LESL…LGNL, DLIS…LGSI, STLR…SFGN, LTSL…LGNI, SLQF…VLSL, and VGNL…GLRV. Residues asparagine 150 and asparagine 161 are each glycosylated (N-linked (GlcNAc...) asparagine). The N-linked (GlcNAc...) asparagine glycan is linked to asparagine 215.

In terms of assembly, interacts with WAK17 isoform 1; the interaction is direct. (Microbial infection) Interacts with G.zeae CFEM1; the interaction is direct. Interacts with G.zeae CFEMN1; the interaction is direct. Interacts with G.zeae CFEM5; the interaction is direct.

Contributes to activation of the hypersensitive response, a form of programmed cell death, upon fungal infection. May sense the presence of fungal material and relay the signal to WAK17 isoform 1. This is Disease resistance protein BAK6 from Zea mays (Maize).